We begin with the raw amino-acid sequence, 176 residues long: R-phycoerythrin beta chain (176 aa).

Residues Cys-50 and Cys-61 each contribute to the phycourobilin site. An N4-methylasparagine modification is found at Asn-72. Residues Cys-82 and Cys-158 each coordinate (2R,3E)-phycoerythrobilin.

This sequence belongs to the phycobiliprotein family. In terms of assembly, heterodimer of an alpha and a beta chain. Post-translationally, contains two covalently linked phycoerythrobilin chromophores and one covalently linked phycourobilin chromophore.

It localises to the plastid. The protein resides in the chloroplast thylakoid membrane. In terms of biological role, light-harvesting photosynthetic bile pigment-protein from the phycobiliprotein complex. This chain is R-phycoerythrin beta chain (cpeB), found in Aglaothamnion neglectum (Red alga).